Reading from the N-terminus, the 250-residue chain is UPF0736 protein RBAM_011410 (250 aa).

Belongs to the UPF0736 family.

The protein is UPF0736 protein RBAM_011410 of Bacillus velezensis (strain DSM 23117 / BGSC 10A6 / LMG 26770 / FZB42) (Bacillus amyloliquefaciens subsp. plantarum).